A 269-amino-acid chain; its full sequence is JmjC domain-containing protein 8 (269 aa).

The first 24 residues, 1 to 24 (MAAAGRFGLLLLIVLWTMVTVVLP), serve as a signal peptide directing secretion. 3 N-linked (GlcNAc...) asparagine glycosylation sites follow: N135, N145, and N214. Positions 147–269 (TEWAPLFQHY…TSVFISTFLG (123 aa)) constitute a JmjC domain.

In terms of assembly, oligomer. Dimer. Interacts with PKM; regulates angiogenesis and metabolism. In terms of processing, N-glycosylated.

It localises to the endoplasmic reticulum lumen. The protein localises to the cytoplasm. In terms of biological role, functions as a positive regulator of TNF-induced NF-kappaB signaling. Regulates angiogenesis and cellular metabolism through interaction with PKM. The polypeptide is JmjC domain-containing protein 8 (Rattus norvegicus (Rat)).